Consider the following 266-residue polypeptide: Cysteine-rich repeat secretory protein 41 (266 aa).

The signal sequence occupies residues 1–26 (MSSVFGSVHILAMIAIQLLLTHSVSS). Gnk2-homologous domains lie at 33-136 (YLHH…SVAS) and 142-253 (YEND…LYPF).

This sequence belongs to the cysteine-rich repeat secretory protein family.

It is found in the secreted. The sequence is that of Cysteine-rich repeat secretory protein 41 (CRRSP41) from Arabidopsis thaliana (Mouse-ear cress).